Consider the following 375-residue polypeptide: Probable protein-glutamate methylesterase BB_0415 (375 aa).

In terms of domain architecture, Response regulatory spans 6–120 (SVLIIEYFAV…SHEIKKEQII (115 aa)). In terms of domain architecture, CheB-type methylesterase spans 183-375 (KLRKFDIIAI…KLLKAILINS (193 aa)). Catalysis depends on residues Ser-195, His-221, and Asp-317.

It carries out the reaction [protein]-L-glutamate 5-O-methyl ester + H2O = L-glutamyl-[protein] + methanol + H(+). The sequence is that of Probable protein-glutamate methylesterase BB_0415 from Borreliella burgdorferi (strain ATCC 35210 / DSM 4680 / CIP 102532 / B31) (Borrelia burgdorferi).